A 410-amino-acid chain; its full sequence is Gamma-glutamyl phosphate reductase (410 aa).

The protein belongs to the gamma-glutamyl phosphate reductase family.

Its subcellular location is the cytoplasm. The catalysed reaction is L-glutamate 5-semialdehyde + phosphate + NADP(+) = L-glutamyl 5-phosphate + NADPH + H(+). It functions in the pathway amino-acid biosynthesis; L-proline biosynthesis; L-glutamate 5-semialdehyde from L-glutamate: step 2/2. Catalyzes the NADPH-dependent reduction of L-glutamate 5-phosphate into L-glutamate 5-semialdehyde and phosphate. The product spontaneously undergoes cyclization to form 1-pyrroline-5-carboxylate. This Campylobacter jejuni subsp. jejuni serotype O:23/36 (strain 81-176) protein is Gamma-glutamyl phosphate reductase.